The chain runs to 367 residues: Queuine tRNA-ribosyltransferase (367 aa).

Residue Asp-92 is the Proton acceptor of the active site. Substrate is bound by residues Asp-92–Phe-96, Asp-146, Gln-188, and Gly-215. The interval Gly-246 to Asp-252 is RNA binding. The active-site Nucleophile is the Asp-265. Residues Cys-303, Cys-305, Cys-308, and His-334 each coordinate Zn(2+).

It belongs to the queuine tRNA-ribosyltransferase family. In terms of assembly, homodimer. Within each dimer, one monomer is responsible for RNA recognition and catalysis, while the other monomer binds to the replacement base PreQ1. Zn(2+) is required as a cofactor.

It carries out the reaction 7-aminomethyl-7-carbaguanine + guanosine(34) in tRNA = 7-aminomethyl-7-carbaguanosine(34) in tRNA + guanine. It functions in the pathway tRNA modification; tRNA-queuosine biosynthesis. Its function is as follows. Catalyzes the base-exchange of a guanine (G) residue with the queuine precursor 7-aminomethyl-7-deazaguanine (PreQ1) at position 34 (anticodon wobble position) in tRNAs with GU(N) anticodons (tRNA-Asp, -Asn, -His and -Tyr). Catalysis occurs through a double-displacement mechanism. The nucleophile active site attacks the C1' of nucleotide 34 to detach the guanine base from the RNA, forming a covalent enzyme-RNA intermediate. The proton acceptor active site deprotonates the incoming PreQ1, allowing a nucleophilic attack on the C1' of the ribose to form the product. After dissociation, two additional enzymatic reactions on the tRNA convert PreQ1 to queuine (Q), resulting in the hypermodified nucleoside queuosine (7-(((4,5-cis-dihydroxy-2-cyclopenten-1-yl)amino)methyl)-7-deazaguanosine). This Francisella tularensis subsp. mediasiatica (strain FSC147) protein is Queuine tRNA-ribosyltransferase.